A 745-amino-acid polypeptide reads, in one-letter code: Exocyst complex component 3 (745 aa).

Lys-28 carries the N6-acetyllysine modification.

The protein belongs to the SEC6 family. As to quaternary structure, the exocyst complex is composed of EXOC1, EXOC2, EXOC3, EXOC4, EXOC5, EXOC6, EXOC7 and EXOC8. Interacts with EXOC3L1. Interacts with BIRC6/bruce. Interacts with MYRIP. Interacts with SLC6A9.

The protein resides in the cytoplasm. It is found in the perinuclear region. It localises to the cell projection. Its subcellular location is the growth cone. The protein localises to the neuron projection. The protein resides in the midbody. It is found in the golgi apparatus. Its function is as follows. Component of the exocyst complex involved in the docking of exocytic vesicles with fusion sites on the plasma membrane. In Bos taurus (Bovine), this protein is Exocyst complex component 3 (EXOC3).